The following is a 218-amino-acid chain: Urease accessory protein UreG (218 aa).

Position 22–29 (22–29 (GPVGSGKT)) interacts with GTP.

The protein belongs to the SIMIBI class G3E GTPase family. UreG subfamily. In terms of assembly, homodimer. UreD, UreF and UreG form a complex that acts as a GTP-hydrolysis-dependent molecular chaperone, activating the urease apoprotein by helping to assemble the nickel containing metallocenter of UreC. The UreE protein probably delivers the nickel.

Its subcellular location is the cytoplasm. In terms of biological role, facilitates the functional incorporation of the urease nickel metallocenter. This process requires GTP hydrolysis, probably effectuated by UreG. The protein is Urease accessory protein UreG of Polaromonas naphthalenivorans (strain CJ2).